Consider the following 601-residue polypeptide: Elongation factor 4 (601 aa).

A tr-type G domain is found at 7–189 (SLIRNFSIIA…ALVTRLPPPV (183 aa)). GTP-binding positions include 19 to 24 (DHGKST) and 136 to 139 (NKVD).

This sequence belongs to the TRAFAC class translation factor GTPase superfamily. Classic translation factor GTPase family. LepA subfamily.

It is found in the cell inner membrane. It carries out the reaction GTP + H2O = GDP + phosphate + H(+). In terms of biological role, required for accurate and efficient protein synthesis under certain stress conditions. May act as a fidelity factor of the translation reaction, by catalyzing a one-codon backward translocation of tRNAs on improperly translocated ribosomes. Back-translocation proceeds from a post-translocation (POST) complex to a pre-translocation (PRE) complex, thus giving elongation factor G a second chance to translocate the tRNAs correctly. Binds to ribosomes in a GTP-dependent manner. The polypeptide is Elongation factor 4 (Gluconacetobacter diazotrophicus (strain ATCC 49037 / DSM 5601 / CCUG 37298 / CIP 103539 / LMG 7603 / PAl5)).